Consider the following 259-residue polypeptide: Aspartate/glutamate leucyltransferase (259 aa).

Belongs to the R-transferase family. Bpt subfamily.

Its subcellular location is the cytoplasm. It catalyses the reaction N-terminal L-glutamyl-[protein] + L-leucyl-tRNA(Leu) = N-terminal L-leucyl-L-glutamyl-[protein] + tRNA(Leu) + H(+). The catalysed reaction is N-terminal L-aspartyl-[protein] + L-leucyl-tRNA(Leu) = N-terminal L-leucyl-L-aspartyl-[protein] + tRNA(Leu) + H(+). In terms of biological role, functions in the N-end rule pathway of protein degradation where it conjugates Leu from its aminoacyl-tRNA to the N-termini of proteins containing an N-terminal aspartate or glutamate. The chain is Aspartate/glutamate leucyltransferase from Rhizobium meliloti (strain 1021) (Ensifer meliloti).